A 435-amino-acid chain; its full sequence is Glucan 1,3-beta-glucosidase (435 aa).

Positions 1-30 are cleaved as a signal peptide; sequence MLFPVLHLPKAMKFSSFSLIASSLLSLVAA. The active-site Proton donor is the E222. Intrachain disulfides connect C306–C432 and C331–C357. E323 functions as the Nucleophile in the catalytic mechanism.

It belongs to the glycosyl hydrolase 5 (cellulase A) family.

It localises to the secreted. It catalyses the reaction Successive hydrolysis of beta-D-glucose units from the non-reducing ends of (1-&gt;3)-beta-D-glucans, releasing alpha-glucose.. Functionally, beta-glucanases participate in the metabolism of beta-glucan, the main structural component of the cell wall. It could also function biosynthetically as a transglycosylase. The protein is Glucan 1,3-beta-glucosidase of Pichia angusta (Yeast).